Here is a 275-residue protein sequence, read N- to C-terminus: Ribosomal RNA small subunit methyltransferase A (275 aa).

Residues Asn19, Leu21, Gly46, Glu71, Asp94, and Asn117 each contribute to the S-adenosyl-L-methionine site.

This sequence belongs to the class I-like SAM-binding methyltransferase superfamily. rRNA adenine N(6)-methyltransferase family. RsmA subfamily.

Its subcellular location is the cytoplasm. The enzyme catalyses adenosine(1518)/adenosine(1519) in 16S rRNA + 4 S-adenosyl-L-methionine = N(6)-dimethyladenosine(1518)/N(6)-dimethyladenosine(1519) in 16S rRNA + 4 S-adenosyl-L-homocysteine + 4 H(+). In terms of biological role, specifically dimethylates two adjacent adenosines (A1518 and A1519) in the loop of a conserved hairpin near the 3'-end of 16S rRNA in the 30S particle. May play a critical role in biogenesis of 30S subunits. This is Ribosomal RNA small subunit methyltransferase A from Burkholderia orbicola (strain MC0-3).